The sequence spans 257 residues: UPF0246 protein RHOS4_29700 (257 aa).

This sequence belongs to the UPF0246 family.

The chain is UPF0246 protein RHOS4_29700 from Cereibacter sphaeroides (strain ATCC 17023 / DSM 158 / JCM 6121 / CCUG 31486 / LMG 2827 / NBRC 12203 / NCIMB 8253 / ATH 2.4.1.) (Rhodobacter sphaeroides).